A 582-amino-acid chain; its full sequence is uncharacterized protein (582 aa).

The next 6 membrane-spanning stretches (helical) occupy residues 17-37 (VAML…LPTV), 57-77 (LGAV…GAVY), 131-151 (MTAT…IMAI), 156-176 (ALTW…YWII), 239-259 (ALML…LIWF), and 271-291 (VGSL…VLMA). The ABC transmembrane type-1 domain maps to 17–300 (VAMLMMLQLV…ATMTLAVLPR (284 aa)). The 237-residue stretch at 335 to 571 (VRLAGATFTY…CPTYAEFAAS (237 aa)) folds into the ABC transporter domain. 369–376 (GSTGSGKS) provides a ligand contact to ATP.

Belongs to the ABC transporter superfamily. MsbA family.

The protein resides in the cell membrane. This is an uncharacterized protein from Mycobacterium bovis (strain ATCC BAA-935 / AF2122/97).